The sequence spans 197 residues: Large ribosomal subunit protein uL22 (197 aa).

The disordered stretch occupies residues 118–197 (ESRPAKDQRS…ETSAAKGGSD (80 aa)). A compositionally biased stretch (low complexity) spans 149–165 (APAKKAAAKAPAKKAPA). Positions 172 to 183 (TPAKKAPAKKAP) are enriched in basic residues. Over residues 184-197 (AKASETSAAKGGSD) the composition is skewed to low complexity.

The protein belongs to the universal ribosomal protein uL22 family. Part of the 50S ribosomal subunit.

Its function is as follows. This protein binds specifically to 23S rRNA; its binding is stimulated by other ribosomal proteins, e.g. L4, L17, and L20. It is important during the early stages of 50S assembly. It makes multiple contacts with different domains of the 23S rRNA in the assembled 50S subunit and ribosome. In terms of biological role, the globular domain of the protein is located near the polypeptide exit tunnel on the outside of the subunit, while an extended beta-hairpin is found that lines the wall of the exit tunnel in the center of the 70S ribosome. The protein is Large ribosomal subunit protein uL22 of Mycobacterium bovis (strain ATCC BAA-935 / AF2122/97).